We begin with the raw amino-acid sequence, 231 residues long: NADH-ubiquinone oxidoreductase chain 4 (231 aa).

7 helical membrane passes run 1 to 21 (PIAG…YGII), 34 to 54 (MFLP…LTCL), 63 to 85 (IAYS…TPWG), 89 to 111 (AMAL…NTTY), 128 to 148 (ILPM…ATPP), 169 to 189 (TIIL…HMFL), and 211 to 231 (LLMT…ELVI).

Belongs to the complex I subunit 4 family.

The protein localises to the mitochondrion membrane. The enzyme catalyses a ubiquinone + NADH + 5 H(+)(in) = a ubiquinol + NAD(+) + 4 H(+)(out). Functionally, core subunit of the mitochondrial membrane respiratory chain NADH dehydrogenase (Complex I) that is believed to belong to the minimal assembly required for catalysis. Complex I functions in the transfer of electrons from NADH to the respiratory chain. The immediate electron acceptor for the enzyme is believed to be ubiquinone. This is NADH-ubiquinone oxidoreductase chain 4 (MT-ND4) from Porthidium ophryomegas (Slender hognose viper).